Reading from the N-terminus, the 358-residue chain is Phospho-N-acetylmuramoyl-pentapeptide-transferase (358 aa).

Helical transmembrane passes span 19-39 (YLTL…VLIG), 71-91 (TMGG…WADL), 95-115 (YVWV…IDDY), 126-146 (LIAR…ALYL), 166-186 (VMPQ…VGTS), 194-214 (GLDG…AIFA), 237-257 (LVIV…FNTY), 261-281 (VFMG…IAVL), 286-306 (IVLV…ILQV), and 336-356 (VIVR…ATLK).

This sequence belongs to the glycosyltransferase 4 family. MraY subfamily. Mg(2+) is required as a cofactor.

The protein resides in the cell inner membrane. The catalysed reaction is UDP-N-acetyl-alpha-D-muramoyl-L-alanyl-gamma-D-glutamyl-meso-2,6-diaminopimeloyl-D-alanyl-D-alanine + di-trans,octa-cis-undecaprenyl phosphate = di-trans,octa-cis-undecaprenyl diphospho-N-acetyl-alpha-D-muramoyl-L-alanyl-D-glutamyl-meso-2,6-diaminopimeloyl-D-alanyl-D-alanine + UMP. The protein operates within cell wall biogenesis; peptidoglycan biosynthesis. In terms of biological role, catalyzes the initial step of the lipid cycle reactions in the biosynthesis of the cell wall peptidoglycan: transfers peptidoglycan precursor phospho-MurNAc-pentapeptide from UDP-MurNAc-pentapeptide onto the lipid carrier undecaprenyl phosphate, yielding undecaprenyl-pyrophosphoryl-MurNAc-pentapeptide, known as lipid I. This chain is Phospho-N-acetylmuramoyl-pentapeptide-transferase, found in Pseudoalteromonas atlantica (strain T6c / ATCC BAA-1087).